A 504-amino-acid polypeptide reads, in one-letter code: Bifunctional purine biosynthesis protein PurH (504 aa).

The MGS-like domain occupies 1 to 144 (MRKRALISVY…KSFKNVVVIS (144 aa)).

Belongs to the PurH family.

The catalysed reaction is (6R)-10-formyltetrahydrofolate + 5-amino-1-(5-phospho-beta-D-ribosyl)imidazole-4-carboxamide = 5-formamido-1-(5-phospho-D-ribosyl)imidazole-4-carboxamide + (6S)-5,6,7,8-tetrahydrofolate. It catalyses the reaction IMP + H2O = 5-formamido-1-(5-phospho-D-ribosyl)imidazole-4-carboxamide. It participates in purine metabolism; IMP biosynthesis via de novo pathway; 5-formamido-1-(5-phospho-D-ribosyl)imidazole-4-carboxamide from 5-amino-1-(5-phospho-D-ribosyl)imidazole-4-carboxamide (10-formyl THF route): step 1/1. Its pathway is purine metabolism; IMP biosynthesis via de novo pathway; IMP from 5-formamido-1-(5-phospho-D-ribosyl)imidazole-4-carboxamide: step 1/1. This is Bifunctional purine biosynthesis protein PurH from Fusobacterium nucleatum subsp. nucleatum (strain ATCC 25586 / DSM 15643 / BCRC 10681 / CIP 101130 / JCM 8532 / KCTC 2640 / LMG 13131 / VPI 4355).